The primary structure comprises 1256 residues: SNF2 domain-containing protein CLASSY 1 (1256 aa).

Disordered regions lie at residues 269-290 (ELRR…EIQP) and 448-467 (GNVV…VSRE). Residues 278–290 (GRPERYGDSEIQP) are compositionally biased toward basic and acidic residues. Basic residues predominate over residues 451 to 463 (VHKRNGPHSRIRS). Residues 699–898 (DPSSDKIGGC…FNTLCLARPK (200 aa)) enclose the Helicase ATP-binding domain. 712–719 (HTPGAGKT) contacts ATP. The short motif at 849–852 (DEGH) is the DEAH box element. In terms of domain architecture, Helicase C-terminal spans 1061–1222 (FVLNLVFRVV…EFVEDPSQWQ (162 aa)).

This sequence belongs to the helicase family. In terms of assembly, interacts with NRPD1, NRPD3 and SHH1.

The protein resides in the nucleus. It is found in the nucleoplasm. Its subcellular location is the nucleolus. In terms of biological role, probable chromatin remodeling factor. Required for the initial establishment of DNA methylation and for accumulation of 24-nt siRNAs. May act on RNA templates by remodeling ribonucleoprotein structures and thereby influencing the availability of the RNA to polymerases. This is SNF2 domain-containing protein CLASSY 1 (CLSY1) from Arabidopsis thaliana (Mouse-ear cress).